Consider the following 339-residue polypeptide: uncharacterized protein (339 aa).

Position 28-35 (28-35 (GPINSGKT)) interacts with ATP.

The protein belongs to the archaeal ATPase family.

This is an uncharacterized protein from Pyrococcus abyssi (strain GE5 / Orsay).